The following is a 156-amino-acid chain: ATP synthase subunit b (156 aa).

A helical transmembrane segment spans residues 7 to 26; that stretch reads LIGQAIWFALFIWITMKYVW.

The protein belongs to the ATPase B chain family. In terms of assembly, F-type ATPases have 2 components, F(1) - the catalytic core - and F(0) - the membrane proton channel. F(1) has five subunits: alpha(3), beta(3), gamma(1), delta(1), epsilon(1). F(0) has three main subunits: a(1), b(2) and c(10-14). The alpha and beta chains form an alternating ring which encloses part of the gamma chain. F(1) is attached to F(0) by a central stalk formed by the gamma and epsilon chains, while a peripheral stalk is formed by the delta and b chains.

It is found in the cell inner membrane. In terms of biological role, f(1)F(0) ATP synthase produces ATP from ADP in the presence of a proton or sodium gradient. F-type ATPases consist of two structural domains, F(1) containing the extramembraneous catalytic core and F(0) containing the membrane proton channel, linked together by a central stalk and a peripheral stalk. During catalysis, ATP synthesis in the catalytic domain of F(1) is coupled via a rotary mechanism of the central stalk subunits to proton translocation. Functionally, component of the F(0) channel, it forms part of the peripheral stalk, linking F(1) to F(0). This is ATP synthase subunit b from Dechloromonas aromatica (strain RCB).